A 434-amino-acid chain; its full sequence is RHOMBOID-like protein 9, chloroplastic (434 aa).

A chloroplast-targeting transit peptide spans Met1–Arg68. 8 consecutive transmembrane segments (helical) span residues Phe182 to Ala202, Met209 to Gly229, Met238 to Gly258, Leu267 to Leu287, Thr289 to Val309, Leu326 to Ile346, Leu352 to Gly372, and Phe399 to Gly419.

Belongs to the peptidase S54 family.

The protein resides in the plastid. Its subcellular location is the chloroplast membrane. Its function is as follows. Probable rhomboid-type serine protease that catalyzes intramembrane proteolysis. The protein is RHOMBOID-like protein 9, chloroplastic of Arabidopsis thaliana (Mouse-ear cress).